Here is a 122-residue protein sequence, read N- to C-terminus: Large ribosomal subunit protein uL14 (122 aa).

This sequence belongs to the universal ribosomal protein uL14 family. As to quaternary structure, part of the 50S ribosomal subunit. Forms a cluster with proteins L3 and L19. In the 70S ribosome, L14 and L19 interact and together make contacts with the 16S rRNA in bridges B5 and B8.

In terms of biological role, binds to 23S rRNA. Forms part of two intersubunit bridges in the 70S ribosome. This chain is Large ribosomal subunit protein uL14, found in Rhodopirellula baltica (strain DSM 10527 / NCIMB 13988 / SH1).